The following is an 804-amino-acid chain: Leucine--tRNA ligase (804 aa).

The 'HIGH' region motif lies at 40–51 (PYPSGAGLHVGH). Residues 576–580 (KMSKS) carry the 'KMSKS' region motif. Lysine 579 serves as a coordination point for ATP.

This sequence belongs to the class-I aminoacyl-tRNA synthetase family.

The protein resides in the cytoplasm. The catalysed reaction is tRNA(Leu) + L-leucine + ATP = L-leucyl-tRNA(Leu) + AMP + diphosphate. The polypeptide is Leucine--tRNA ligase (Staphylococcus haemolyticus (strain JCSC1435)).